A 131-amino-acid chain; its full sequence is MIVDTSAIVAIVSGESGAQVLKEALERSPNSRMSAPNYVELCAIMQRRDRPEISRLVDRLLDDYGIQVEAVDADQARVAAQAYRDYGRGSGHPARLNLGDTYSYALAQVTGEPLLFRGDDFTHTDIRPACT.

In terms of domain architecture, PINc spans 1-125 (MIVDTSAIVA…FRGDDFTHTD (125 aa)). The Mg(2+) site is built by D4 and D100.

It belongs to the PINc/VapC protein family. The cofactor is Mg(2+).

In terms of biological role, toxic component of a type II toxin-antitoxin (TA) system. An RNase. Its cognate antitoxin is VapB42. This chain is Ribonuclease VapC42, found in Mycobacterium tuberculosis (strain CDC 1551 / Oshkosh).